The primary structure comprises 174 residues: MDPIDVTYHDEVGFLDDKNRNWQDWIMKLLLLAKKEIGKDNNLEMSINFVDEDRSHEINLKYRDKDRPTDVISFAIEDGEDAIDLSVFEDDPDFQEDIGDLFMCPSVIKRHSKEYGTGFDREFGYTVVHGFLHLNGYDHIKPDEAKEMFGIQGKVLEECGLPLYPDQLDEGRGK.

The Zn(2+) site is built by His129, His133, and His139.

The protein belongs to the endoribonuclease YbeY family. Requires Zn(2+) as cofactor.

It is found in the cytoplasm. Its function is as follows. Single strand-specific metallo-endoribonuclease involved in late-stage 70S ribosome quality control and in maturation of the 3' terminus of the 16S rRNA. The chain is Endoribonuclease YbeY from Lactobacillus helveticus (strain DPC 4571).